The primary structure comprises 137 residues: 2-iminobutanoate/2-iminopropanoate deaminase (137 aa).

Ser-2 bears the N-acetylserine mark. N6-succinyllysine occurs at positions 13, 60, and 67. Phosphothreonine is present on Thr-74.

It belongs to the RutC family. In terms of assembly, homotrimer. Interacts with YTHDF2. In terms of tissue distribution, liver and kidney.

The protein resides in the cytoplasm. It localises to the nucleus. Its subcellular location is the peroxisome. It is found in the mitochondrion. It catalyses the reaction 2-iminobutanoate + H2O = 2-oxobutanoate + NH4(+). The enzyme catalyses 2-iminopropanoate + H2O = pyruvate + NH4(+). Its function is as follows. Catalyzes the hydrolytic deamination of enamine/imine intermediates that form during the course of normal metabolism. May facilitate the release of ammonia from these potentially toxic reactive metabolites, reducing their impact on cellular components. It may act on enamine/imine intermediates formed by several types of pyridoxal-5'-phosphate-dependent dehydratases including L-threonine dehydratase. In terms of biological role, also promotes endoribonucleolytic cleavage of some transcripts by promoting recruitment of the ribonuclease P/MRP complex. Acts by bridging YTHDF2 and the ribonuclease P/MRP complex. RIDA/HRSP12 binds to N6-methyladenosine (m6A)-containing mRNAs containing a 5'-GGUUC-3' motif: cooperative binding of RIDA/HRSP12 and YTHDF2 to such transcripts lead to recruitment of the ribonuclease P/MRP complex and subsequent endoribonucleolytic cleavage. This chain is 2-iminobutanoate/2-iminopropanoate deaminase, found in Rattus norvegicus (Rat).